The sequence spans 670 residues: Receptor for retinol uptake stra6 (670 aa).

Topologically, residues 1 to 38 (MSAETVNNYDYSDWYENAAPTKAPVEVIPPCDPTADEG) are extracellular. The chain crosses the membrane as a helical span at residues 39–59 (LFHICIAAISLVVMLVLAILA). The Cytoplasmic portion of the chain corresponds to 60 to 87 (RRQKLSDNQRGLTGLLSPVNFLDHTQHK). Residues 88–108 (GLAVAVYGVLFCKLVGMVLSH) form a helical membrane-spanning segment. Residues 109–121 (HPLPFTKEVANKE) lie on the Extracellular side of the membrane. The chain crosses the membrane as a helical span at residues 122–142 (FWMILALLYYPALYYPLLACG). The Cytoplasmic segment spans residues 143 to 145 (TLH). Residues 146-166 (NKVGYVLGSLLSWTHFGILVW) form a helical membrane-spanning segment. Residues 167-182 (QKVDCPKTPQIYKYYA) are Extracellular-facing. Residues 183-203 (LFGSLPQIACLAFLSFQYPLL) form a helical membrane-spanning segment. Residues 204–274 (LFKGLQNTET…PEDVFRFPLK (71 aa)) lie on the Cytoplasmic side of the membrane. A helical transmembrane segment spans residues 275–295 (LAISVVVAFIALYQMALLLIS). Topologically, residues 296 to 346 (GVLPTLHIVRRGVDENIAFLLAGFNIILSNDRQEVVRIVVYYLWCVEICYV) are extracellular. Residues 347-367 (SAVTLSCLVNLLMLMRSMVLH) traverse the membrane as a helical segment. At 368-401 (RSNLKGLYRGDSLNVFNCHRSIRPSRPALVCWMG) the chain is on the cytoplasmic side. A helical transmembrane segment spans residues 402–422 (FTSYQAAFLCLGMAIQTLVFF). At 423-452 (ICILFAVFLIIIPILWGTNLMLFHIIGNLW) the chain is on the extracellular side. A helical membrane pass occupies residues 453-473 (PFWLTLVLAALIQHVASRFLF). Topologically, residues 474–488 (IRKDGGTRDLNNRGS) are cytoplasmic. An intramembrane region (helical) is located at residues 489-526 (LFLLSYILFLVNVMIGVVLGIWRVVITALFNIVHLGRL). Over 527–670 (DISLLNRNVE…KEAESAAASN (144 aa)) the chain is Cytoplasmic. The tract at residues 600–626 (VSNAKRARAHWQLLYTLVNNPSLVGSR) is interaction with calmodulin. Residues 640–670 (GALSRTSKEGSKKDGSVNEPSKEAESAAASN) form a disordered region. Basic and acidic residues predominate over residues 645 to 664 (TSKEGSKKDGSVNEPSKEAE).

As to quaternary structure, homodimer. Interacts (via C-terminus) with calmodulin.

It is found in the cell membrane. Retinol transporter. Accepts retinol from the extracellular retinol-binding protein rbp4, mediates retinol transport across the cell membrane, and then transmits retinol to the cytoplasmic retinol-binding protein rbp1. Required for normal vitamin A homeostasis. In Danio rerio (Zebrafish), this protein is Receptor for retinol uptake stra6.